We begin with the raw amino-acid sequence, 616 residues long: Dihydroxy-acid dehydratase (616 aa).

Asp81 is a Mg(2+) binding site. Cys122 contacts [2Fe-2S] cluster. Positions 123 and 124 each coordinate Mg(2+). Lys124 carries the N6-carboxylysine modification. Position 195 (Cys195) interacts with [2Fe-2S] cluster. Glu491 contacts Mg(2+). The Proton acceptor role is filled by Ser517.

The protein belongs to the IlvD/Edd family. As to quaternary structure, homodimer. The cofactor is [2Fe-2S] cluster. It depends on Mg(2+) as a cofactor.

It catalyses the reaction (2R)-2,3-dihydroxy-3-methylbutanoate = 3-methyl-2-oxobutanoate + H2O. It carries out the reaction (2R,3R)-2,3-dihydroxy-3-methylpentanoate = (S)-3-methyl-2-oxopentanoate + H2O. The protein operates within amino-acid biosynthesis; L-isoleucine biosynthesis; L-isoleucine from 2-oxobutanoate: step 3/4. Its pathway is amino-acid biosynthesis; L-valine biosynthesis; L-valine from pyruvate: step 3/4. Functionally, functions in the biosynthesis of branched-chain amino acids. Catalyzes the dehydration of (2R,3R)-2,3-dihydroxy-3-methylpentanoate (2,3-dihydroxy-3-methylvalerate) into 2-oxo-3-methylpentanoate (2-oxo-3-methylvalerate) and of (2R)-2,3-dihydroxy-3-methylbutanoate (2,3-dihydroxyisovalerate) into 2-oxo-3-methylbutanoate (2-oxoisovalerate), the penultimate precursor to L-isoleucine and L-valine, respectively. In Pectobacterium carotovorum subsp. carotovorum (strain PC1), this protein is Dihydroxy-acid dehydratase.